Consider the following 161-residue polypeptide: Pleiotrophin-B (161 aa).

Positions 1 to 23 (MHHQHGLFMLALLAFLLVMTVLG) are cleaved as a signal peptide. 5 cysteine pairs are disulfide-bonded: Cys41-Cys70, Cys49-Cys79, Cys56-Cys83, Cys93-Cys125, and Cys103-Cys135. 2 chondroitin sulfate binding regions span residues 86-93 (KKQFGAEC) and 117-125 (KRALHNAEC). The tract at residues 136 to 161 (GKVTKPKLQESKKKKKEGKNKEKLLD) is disordered. Residues 141–161 (PKLQESKKKKKEGKNKEKLLD) form a chondroitin sulfate A binding region.

It belongs to the pleiotrophin family. As to expression, expressed in high levels in brain and eye. Lower levels in bone. In the tailbud embryo stage, it is expressed exclusively in the central nervous system, especially in the hind region of the brain.

It is found in the secreted. Its function is as follows. Secreted growth factor that mediates its signal through cell-surface proteoglycan and non-proteoglycan receptors. Binds cell-surface proteoglycan receptor via their chondroitin sulfate (CS) groups. Thereby regulates many processes like cell proliferation, cell survival, cell growth, cell differentiation and cell migration. Has antibacterial activity against both Gram-positive and Gram-negative bacteria. In Xenopus laevis (African clawed frog), this protein is Pleiotrophin-B (ptn-b).